We begin with the raw amino-acid sequence, 412 residues long: Peptidase T (412 aa).

Histidine 84 contacts Zn(2+). Residue aspartate 86 is part of the active site. Position 146 (aspartate 146) interacts with Zn(2+). The active-site Proton acceptor is the glutamate 179. Glutamate 180, aspartate 202, and histidine 385 together coordinate Zn(2+).

The protein belongs to the peptidase M20B family. Zn(2+) serves as cofactor.

It is found in the cytoplasm. The enzyme catalyses Release of the N-terminal residue from a tripeptide.. Cleaves the N-terminal amino acid of tripeptides. The polypeptide is Peptidase T (Pasteurella multocida (strain Pm70)).